The following is a 116-amino-acid chain: MSTVELLKHIYDINLSYLLLAQRLINHEKASAMFRLGISESMADTLAELTLPQLVKLAETNQLICHFRFEDHETVQQLTKESRVDDLQQIHTGILLSTHLFQQLSAQDDTSIKKRA.

It belongs to the FlhD family. As to quaternary structure, homodimer; disulfide-linked. Forms a heterohexamer composed of two FlhC and four FlhD subunits. Each FlhC binds a FlhD dimer, forming a heterotrimer, and a hexamer assembles by dimerization of two heterotrimers.

The protein localises to the cytoplasm. In terms of biological role, functions in complex with FlhC as a master transcriptional regulator that regulates transcription of several flagellar and non-flagellar operons by binding to their promoter region. Activates expression of class 2 flagellar genes, including fliA, which is a flagellum-specific sigma factor that turns on the class 3 genes. Also regulates genes whose products function in a variety of physiological pathways. The polypeptide is Flagellar transcriptional regulator FlhD (Xenorhabdus nematophila (Achromobacter nematophilus)).